The following is a 201-amino-acid chain: Recombination protein RecR (201 aa).

Residues 59 to 74 form a C4-type zinc finger; it reads CEICGNMDTENICRIC. The region spanning 82-177 is the Toprim domain; that stretch reads SIIAIVETVA…KISRLASGIP (96 aa).

This sequence belongs to the RecR family.

In terms of biological role, may play a role in DNA repair. It seems to be involved in an RecBC-independent recombinational process of DNA repair. It may act with RecF and RecO. In Rickettsia peacockii (strain Rustic), this protein is Recombination protein RecR.